The primary structure comprises 524 residues: Protein-export membrane protein SecD (524 aa).

The next 6 membrane-spanning stretches (helical) occupy residues Val-10–Gly-30, Lys-366–Ile-386, Gly-389–Leu-409, Asp-420–Ala-442, Phe-465–Leu-485, and Leu-487–Val-507.

Belongs to the SecD/SecF family. SecD subfamily. As to quaternary structure, part of the protein translocation apparatus. Forms a homodimer and complexes with SecF.

Its subcellular location is the cell membrane. Functionally, involved in protein export. In Haloferax volcanii (strain ATCC 29605 / DSM 3757 / JCM 8879 / NBRC 14742 / NCIMB 2012 / VKM B-1768 / DS2) (Halobacterium volcanii), this protein is Protein-export membrane protein SecD.